A 61-amino-acid chain; its full sequence is Photosystem II reaction center X protein (61 aa).

The chain crosses the membrane as a helical span at residues 26–46 (IGSFIAAALLIVIPATAFLIF).

It belongs to the PsbX family. Type 2 subfamily. In terms of assembly, PSII consists of a core antenna complex that captures photons, and an electron transfer chain that converts photonic excitation into a charge separation. PSII forms dimeric complexes.

It is found in the cellular thylakoid membrane. Its function is as follows. Involved in the binding and/or turnover of quinones at the Q(B) site of Photosystem II. The sequence is that of Photosystem II reaction center X protein from Prochlorococcus marinus (strain MIT 9312).